The sequence spans 252 residues: Flap endonuclease Xni (252 aa).

Mg(2+) is bound at residue D105. Residues 162 to 250 (ERTQFIDYLA…LNANLSQFRL (89 aa)) form the 5'-3' exonuclease domain. Positions 172, 173, 181, 183, and 186 each coordinate K(+). Residues 185–190 (GIGPKS) are interaction with DNA.

The protein belongs to the Xni family. It depends on Mg(2+) as a cofactor. K(+) is required as a cofactor.

Functionally, has flap endonuclease activity. During DNA replication, flap endonucleases cleave the 5'-overhanging flap structure that is generated by displacement synthesis when DNA polymerase encounters the 5'-end of a downstream Okazaki fragment. The sequence is that of Flap endonuclease Xni from Shewanella woodyi (strain ATCC 51908 / MS32).